Reading from the N-terminus, the 361-residue chain is Rhomboid domain-containing protein 2 (361 aa).

The next 5 helical transmembrane spans lie at S19–L39, L63–I83, C100–V120, F158–I178, and S182–Y202. 2 disordered regions span residues P265–H287 and P318–P361. Polar residues-rich tracts occupy residues Y267 to S276 and P318 to Q328.

The protein belongs to the peptidase S54 family. As to quaternary structure, might form homotrimers; these trimers are only formed in retina. In terms of tissue distribution, widely expressed, including in retina and brain (at protein level), as well as in kidney, testis and ovary. Expressed in all layers of the retina, including inner segments of photoreceptor cells and ganglion cells (at protein level).

The protein resides in the golgi apparatus. The protein localises to the cis-Golgi network membrane. The chain is Rhomboid domain-containing protein 2 (Rhbdd2) from Mus musculus (Mouse).